Here is a 465-residue protein sequence, read N- to C-terminus: Branched-chain amino acid permease BcaP (465 aa).

The next 13 membrane-spanning stretches (helical) occupy residues 35-55 (LLGIGAIIGTGIFVLTGTGAV), 57-77 (AGPGLTISFVVAALACLFAAL), 103-123 (LMAFIIGWDLILEYMLAVSAV), 133-153 (SFLSGLGIHLPVALTAAPGAV), 159-179 (LFNLPAFVIVMAITYLLYLGI), 188-208 (IMVILKILVVLLFIAVAAVYV), 216-236 (FMPMGFGGVFSAAALVFFAFI), 258-278 (GIIFSLLVCTILYVTVSAIMT), 305-325 (VAGIIDIGAVLGMTTVMLVML), 355-375 (PYVATWFFGTMSALLGSLVPL), 380-400 (KLVNIGTLSAFVLISVAVIVL), 413-432 (CPGVPVIPGLAILFCLFLIL), and 437-456 (VTIVRFLVWLLIGLVIYFLY).

The protein belongs to the amino acid-polyamine-organocation (APC) superfamily.

It localises to the cell membrane. With respect to regulation, isoleucine uptake is efficiently reduced in the presence of 100-fold excess valine, leucine, alanine, threonine, serine, cysteine, asparagine, and a nonproteinaceous amino acid 4-azaleucine. Its function is as follows. Branched-chain amino acid transport system which is involved in the uptake of isoleucine, valine and probably leucine. Can also transport threonine, and is active as a minor serine permease. May be an amino acid permease of rather broad specificity, because several amino acids, albeit at 100-fold excess, are able to prevent isoleucine uptake. Probably does not transport methionine. Together with BraB and BrnQ, plays an important role in the activation of CodY, a branched-chain amino acid-responsive transcriptional regulator that controls the expression of several dozen transcription units in B.subtilis. This is Branched-chain amino acid permease BcaP from Bacillus subtilis (strain 168).